Reading from the N-terminus, the 639-residue chain is Carbon monoxide dehydrogenase (639 aa).

Positions 41, 49, 50, 53, 58, and 72 each coordinate [4Fe-4S] cluster. The [Ni-4Fe-4S] cluster site is built by His-265, Cys-300, Cys-338, Cys-451, Cys-481, and Cys-531.

The protein belongs to the Ni-containing carbon monoxide dehydrogenase family. As to quaternary structure, homodimer. [4Fe-4S] cluster is required as a cofactor. The cofactor is [Ni-4Fe-4S] cluster.

The protein resides in the cytoplasm. It is found in the cell inner membrane. It catalyses the reaction CO + 2 oxidized [2Fe-2S]-[ferredoxin] + H2O = 2 reduced [2Fe-2S]-[ferredoxin] + CO2 + 2 H(+). In terms of biological role, allows growth in a CO-dependent manner in the dark. CODH oxidizes carbon monoxide coupled, via CooF, to the reduction of a hydrogen cation by a hydrogenase (possibly CooH). The sequence is that of Carbon monoxide dehydrogenase (cooS) from Rhodospirillum rubrum.